Consider the following 286-residue polypeptide: MLKTVQQKLHHHTRPLLAWLKLLWRRIDEDHMTTLAGNLAYVSLLSLVPLIAVVFALFAAFPMFSEVSVQIRHFIFANFIPATGDVIQGYIEQFVANSSRMTAVGAFGLIVTSLLLMYSIDSALNTIWRSTRSRPKVYSFAVYWMILTLGPLLAGASLAISSYLLSLRWASDLDGVIDNLLRLFPLILSWAAFWLLYSIVPTTQVRNRDAVIGALVAALLFEAGKKAFALYITTFPSYQLIYGVISVVPILFVWVYWTWCIVLLGAEITVTLGEYRKLKTEETEQP.

A run of 7 helical transmembrane segments spans residues 44–64, 74–94, 104–124, 140–160, 183–203, 210–230, and 244–264; these read LLSL…FPMF, FIFA…IEQF, VGAF…DSAL, FAVY…SLAI, LFPL…VPTT, AVIG…AFAL, and VISV…IVLL.

The protein belongs to the UPF0761 family.

The protein localises to the cell inner membrane. The protein is UPF0761 membrane protein KPK_5501 of Klebsiella pneumoniae (strain 342).